A 460-amino-acid chain; its full sequence is Serine--tRNA ligase (460 aa).

Positions 50-65 (DRNEVSSKIGELKQAG) are enriched in basic and acidic residues. Disordered stretches follow at residues 50 to 71 (DRNEVSSKIGELKQAGDEDAAQ) and 109 to 129 (PDEDAPVGDSEAENVERRREG). Over residues 109-121 (PDEDAPVGDSEAE) the composition is skewed to acidic residues. 241-243 (TAE) contributes to the L-serine binding site. ATP is bound by residues 272–274 (RRE) and Val288. Glu295 lines the L-serine pocket. An ATP-binding site is contributed by 368-371 (EVSS). Ser404 contacts L-serine.

The protein belongs to the class-II aminoacyl-tRNA synthetase family. Type-1 seryl-tRNA synthetase subfamily. In terms of assembly, homodimer. The tRNA molecule binds across the dimer.

It localises to the cytoplasm. It carries out the reaction tRNA(Ser) + L-serine + ATP = L-seryl-tRNA(Ser) + AMP + diphosphate + H(+). The enzyme catalyses tRNA(Sec) + L-serine + ATP = L-seryl-tRNA(Sec) + AMP + diphosphate + H(+). Its pathway is aminoacyl-tRNA biosynthesis; selenocysteinyl-tRNA(Sec) biosynthesis; L-seryl-tRNA(Sec) from L-serine and tRNA(Sec): step 1/1. Functionally, catalyzes the attachment of serine to tRNA(Ser). Is also able to aminoacylate tRNA(Sec) with serine, to form the misacylated tRNA L-seryl-tRNA(Sec), which will be further converted into selenocysteinyl-tRNA(Sec). This Halobacterium salinarum (strain ATCC 29341 / DSM 671 / R1) protein is Serine--tRNA ligase.